The following is a 148-amino-acid chain: UPF0756 membrane protein NMC1845 (148 aa).

4 helical membrane-spanning segments follow: residues 13 to 35 (LILL…LLLM), 50 to 70 (HGLN…LVSG), 80 to 100 (FLNF…WLAG), and 121 to 141 (VIGV…AGIL).

The protein belongs to the UPF0756 family.

It localises to the cell membrane. This chain is UPF0756 membrane protein NMC1845, found in Neisseria meningitidis serogroup C / serotype 2a (strain ATCC 700532 / DSM 15464 / FAM18).